Consider the following 146-residue polypeptide: Aminoglycoside N(6')-acetyltransferase type 1 (146 aa).

The N-acetyltransferase domain occupies 1 to 146 (MNIMPVSESL…RVVYFKKHIG (146 aa)). Substrate contacts are provided by Trp-22, His-25, Tyr-66, and Glu-79. Residue 81 to 83 (IYV) coordinates acetyl-CoA. Asp-115 lines the substrate pocket. Residue Asn-120 coordinates acetyl-CoA. Position 136 (Glu-136) interacts with substrate.

Homodimer.

It catalyses the reaction kanamycin B + acetyl-CoA = N(6')-acetylkanamycin B + CoA + H(+). In terms of biological role, catalyzes the transfer of an acetyl group from acetyl-CoA to the 6'-amino group of aminoglycoside molecules conferring resistance to antibiotics containing the purpurosamine ring including amikacin, kanamycin, tobramycin and netilmicin. The chain is Aminoglycoside N(6')-acetyltransferase type 1 from Acinetobacter genomosp. 13.